The chain runs to 140 residues: 3-hydroxyacyl-[acyl-carrier-protein] dehydratase FabZ (140 aa).

H48 is a catalytic residue.

Belongs to the thioester dehydratase family. FabZ subfamily.

Its subcellular location is the cytoplasm. It catalyses the reaction a (3R)-hydroxyacyl-[ACP] = a (2E)-enoyl-[ACP] + H2O. Functionally, involved in unsaturated fatty acids biosynthesis. Catalyzes the dehydration of short chain beta-hydroxyacyl-ACPs and long chain saturated and unsaturated beta-hydroxyacyl-ACPs. The chain is 3-hydroxyacyl-[acyl-carrier-protein] dehydratase FabZ from Caldicellulosiruptor saccharolyticus (strain ATCC 43494 / DSM 8903 / Tp8T 6331).